We begin with the raw amino-acid sequence, 484 residues long: Suppressor of fused homolog (484 aa).

The disordered stretch occupies residues 1-21 (MAELRPSVAPGPAAPPASGPS). The span at 12 to 21 (PAAPPASGPS) shows a compositional bias: pro residues. K257 is covalently cross-linked (Glycyl lysine isopeptide (Lys-Gly) (interchain with G-Cter in ubiquitin)). Residues 279–360 (SRPPEDEEDS…SSTAIIPHEL (82 aa)) are disordered. S301 bears the Phosphoserine mark. The residue at position 303 (K303) is an N6-acetyllysine. Residue K321 forms a Glycyl lysine isopeptide (Lys-Gly) (interchain with G-Cter in SUMO2) linkage. The span at 336-347 (THDRAPSRKDSL) shows a compositional bias: basic and acidic residues. Phosphoserine is present on residues S342, S346, and S352. Position 353 is a phosphothreonine (T353). S481 is modified (phosphoserine).

It belongs to the SUFU family. May form homodimers. Interacts with ULK3; inactivating the protein kinase activity of ULK3. Interacts with RAB23. Part of a DNA-bound corepressor complex containing SAP18, GLI1 and SIN3. Part of a complex containing CTNNB1. Binds BTRC, GLI2, GLI3, SAP18 and STK36. Binds both free and DNA-bound GLI1. Interacts with KIF7. Interacts with GLI3FL and this interaction regulates the formation of either repressor or activator forms of GLI3. Its association with GLI3FL is regulated by Hh signaling and dissociation of the SUFU-GLI3 interaction requires the presence of the ciliary motor KIF3A. Post-translationally, polyubiquitinated at Lys-257 by the SCF(FBXL17) complex, leading to its subsequent degradation and allowing the release of GLI1 for proper hedgehog/smoothened signal transduction. Ubiquitination is impaired by phosphorylation at Ser-342, Ser-346, Ser-352 and Thr-353. Phosphorylation at Ser-342, Ser-346, Ser-352 and Thr-353 prevents ubiquitination by the SCF(FBXL17) complex. In terms of tissue distribution, widely expressed in adult and fetal tissues.

It localises to the cytoplasm. The protein localises to the nucleus. Its function is as follows. Negative regulator in the hedgehog/smoothened signaling pathway. Down-regulates GLI1-mediated transactivation of target genes. Part of a corepressor complex that acts on DNA-bound GLI1. May also act by linking GLI1 to BTRC and thereby targeting GLI1 to degradation by the proteasome. Sequesters GLI1, GLI2 and GLI3 in the cytoplasm, this effect is overcome by binding of STK36 to both SUFU and a GLI protein. Negative regulator of beta-catenin signaling. Regulates the formation of either the repressor form (GLI3R) or the activator form (GLI3A) of the full-length form of GLI3 (GLI3FL). GLI3FL is complexed with SUFU in the cytoplasm and is maintained in a neutral state. Without the Hh signal, the SUFU-GLI3 complex is recruited to cilia, leading to the efficient processing of GLI3FL into GLI3R. When Hh signaling is initiated, SUFU dissociates from GLI3FL and the latter translocates to the nucleus, where it is phosphorylated, destabilized, and converted to a transcriptional activator (GLI3A). Required for normal embryonic development. Required for the proper formation of hair follicles and the control of epidermal differentiation. The polypeptide is Suppressor of fused homolog (Mus musculus (Mouse)).